Here is a 384-residue protein sequence, read N- to C-terminus: S-adenosylmethionine synthase (384 aa).

Position 15 (H15) interacts with ATP. D17 contributes to the Mg(2+) binding site. K(+) is bound at residue E43. E56 and Q99 together coordinate L-methionine. Residues Q99–R109 form a flexible loop region. Residues D164–K166, R231–F232, D240, R246–K247, A263, and K267 contribute to the ATP site. D240 is a binding site for L-methionine. K271 serves as a coordination point for L-methionine.

Belongs to the AdoMet synthase family. Homotetramer; dimer of dimers. Mg(2+) is required as a cofactor. The cofactor is K(+).

The protein resides in the cytoplasm. It catalyses the reaction L-methionine + ATP + H2O = S-adenosyl-L-methionine + phosphate + diphosphate. It functions in the pathway amino-acid biosynthesis; S-adenosyl-L-methionine biosynthesis; S-adenosyl-L-methionine from L-methionine: step 1/1. Catalyzes the formation of S-adenosylmethionine (AdoMet) from methionine and ATP. The overall synthetic reaction is composed of two sequential steps, AdoMet formation and the subsequent tripolyphosphate hydrolysis which occurs prior to release of AdoMet from the enzyme. The polypeptide is S-adenosylmethionine synthase (Shewanella halifaxensis (strain HAW-EB4)).